Consider the following 201-residue polypeptide: Putative manganese efflux pump MntP (201 aa).

A run of 5 helical transmembrane segments spans residues 6 to 26 (CLAVAVALAMDAFAVAIATGI), 39 to 59 (LAFHFGLFQALMPVAGWTLGL), 105 to 125 (LTLIMLAVATSIDALAVGLSL), 127 to 147 (VLGIDIVTPAIVIGVVCLLFT), and 169 to 189 (LAGGVVLIGIGLRILYEHGVF).

The protein belongs to the MntP (TC 9.B.29) family.

Its subcellular location is the cell inner membrane. Probably functions as a manganese efflux pump. The sequence is that of Putative manganese efflux pump MntP from Nitratidesulfovibrio vulgaris (strain ATCC 29579 / DSM 644 / CCUG 34227 / NCIMB 8303 / VKM B-1760 / Hildenborough) (Desulfovibrio vulgaris).